The primary structure comprises 138 residues: Ribosome-binding factor A (138 aa).

This sequence belongs to the RbfA family. As to quaternary structure, monomer. Binds 30S ribosomal subunits, but not 50S ribosomal subunits or 70S ribosomes.

The protein localises to the cytoplasm. Its function is as follows. One of several proteins that assist in the late maturation steps of the functional core of the 30S ribosomal subunit. Associates with free 30S ribosomal subunits (but not with 30S subunits that are part of 70S ribosomes or polysomes). Required for efficient processing of 16S rRNA. May interact with the 5'-terminal helix region of 16S rRNA. This Chromobacterium violaceum (strain ATCC 12472 / DSM 30191 / JCM 1249 / CCUG 213 / NBRC 12614 / NCIMB 9131 / NCTC 9757 / MK) protein is Ribosome-binding factor A.